Consider the following 360-residue polypeptide: BOLA class I histocompatibility antigen, alpha chain BL3-6 (360 aa).

Residues 1 to 21 (MGPRALLLLLSGVLILTETRA) form the signal peptide. Positions 22–111 (GSHSLRYFST…LRGYYNQSEA (90 aa)) are alpha-1. At 22–308 (GSHSLRYFST…QPSFLTMGII (287 aa)) the chain is on the extracellular side. Asn107 carries an N-linked (GlcNAc...) asparagine glycan. Residues 112 to 203 (GSHTLQWMSG…ENGKDTLLRA (92 aa)) are alpha-2. Cystine bridges form between Cys122–Cys185 and Cys224–Cys280. The alpha-3 stretch occupies residues 204-295 (DPPKAHVTHH…GLQEPLTLRW (92 aa)). The Ig-like C1-type domain maps to 206 to 292 (PKAHVTHHPI…QHEGLQEPLT (87 aa)). The interval 296–308 (EPPQPSFLTMGII) is connecting peptide. Residues 309 to 328 (VGLVLLVVTGAVVAGVVICM) traverse the membrane as a helical segment. The Cytoplasmic segment spans residues 329-360 (KKRSGEKGGNYIQASSSDSAQGSDVSLTVPKV). Residues 340 to 360 (IQASSSDSAQGSDVSLTVPKV) form a disordered region. Low complexity predominate over residues 341-354 (QASSSDSAQGSDVS). Phosphoserine occurs at positions 351 and 354.

The protein belongs to the MHC class I family. Heterodimer of an alpha chain and a beta chain (beta-2-microglobulin).

Its subcellular location is the membrane. Involved in the presentation of foreign antigens to the immune system. The chain is BOLA class I histocompatibility antigen, alpha chain BL3-6 from Bos taurus (Bovine).